Consider the following 54-residue polypeptide: UPF0434 protein BCI_0256 (54 aa).

Belongs to the UPF0434 family.

The polypeptide is UPF0434 protein BCI_0256 (Baumannia cicadellinicola subsp. Homalodisca coagulata).